We begin with the raw amino-acid sequence, 639 residues long: MIAVGPTDLEIYLFHEGSLYKSYELFGAHVIKKNGMVGTRFCVWAPHAREVRLVGSFNEWNGTNFNLMKVSNQGVWMIFIPENLEGHLYKYEITTNDGNVLLKSDPYAFYSELRPHTASIVYNIKGYQWNDQTWRRKKQRKRIYDQPLFIYELHFGSWKKKEDGSFYTYQEMAEELIPYVLEHGFTHIELLPLVEHPFDRSWGYQGIGYYSATSRYGTPHDLMYFIDRCHQAGIGVILDWVPGHFCKDSHGLYMFDGAPAYEYANMQDRENYVWGTANFDLGKPEVRSFLISNALFWMEYFHVDGFRVDAVANMLYWPNSDVLYKNTYAVEFLQKLNETVFAYDPNILMIAEDSTDWPRVTAPTYDGGLGFNYKWNMGWMNDILTYMETPPEHRKYVHNKVTFSLLYAYSENFILPFSHDEVVHGKKSLLSKMPGTYEEKFAQLRLLYGYLLTHPGKKLLFMGGEFGQFDEWKDLEQLDWMLFDFDMHRNMNMYVKELLKCYKRYKPLYELDHSPDGFEWIDVHNAEQSIFSFIRRGKKEDDLLIVVCNFTNKVYHGYKVGVPLFTRYREVINSDAIQFGGFGNINPKPIAAMEGPFHGKPYHIQMTIPPFGISILRPVKKGSVKSFMKTPHPPSHGAS.

The active-site Nucleophile is the Asp309. The active-site Proton donor is Glu352.

Belongs to the glycosyl hydrolase 13 family. GlgB subfamily. As to quaternary structure, monomer.

The enzyme catalyses Transfers a segment of a (1-&gt;4)-alpha-D-glucan chain to a primary hydroxy group in a similar glucan chain.. The protein operates within glycan biosynthesis; glycogen biosynthesis. In terms of biological role, catalyzes the formation of the alpha-1,6-glucosidic linkages in glycogen by scission of a 1,4-alpha-linked oligosaccharide from growing alpha-1,4-glucan chains and the subsequent attachment of the oligosaccharide to the alpha-1,6 position. The chain is 1,4-alpha-glucan branching enzyme GlgB (glgB) from Geobacillus stearothermophilus (Bacillus stearothermophilus).